The chain runs to 276 residues: Omega-amidase NIT2-A (276 aa).

The CN hydrolase domain maps to 4-248; it reads FKLSLVQFLV…ETVLSAEIDL (245 aa). Catalysis depends on E43, which acts as the Proton acceptor. The Proton donor role is filled by K112. C153 acts as the Nucleophile in catalysis.

The protein belongs to the carbon-nitrogen hydrolase superfamily. NIT1/NIT2 family. In terms of assembly, homodimer.

Its subcellular location is the cytoplasm. It catalyses the reaction 2-oxoglutaramate + H2O = 2-oxoglutarate + NH4(+). The catalysed reaction is 2-oxosuccinamate + H2O = oxaloacetate + NH4(+). In terms of biological role, has omega-amidase activity. The role of omega-amidase is to remove potentially toxic intermediates by converting 2-oxoglutaramate and 2-oxosuccinamate to biologically useful 2-oxoglutarate and oxaloacetate, respectively. The polypeptide is Omega-amidase NIT2-A (nit2a) (Xenopus laevis (African clawed frog)).